A 599-amino-acid chain; its full sequence is Elongation factor 4 (599 aa).

Residues 2-184 (NHIRNFSIIA…RLVRDIPAPE (183 aa)) enclose the tr-type G domain. Residues 14–19 (DHGKST) and 131–134 (NKID) contribute to the GTP site.

It belongs to the TRAFAC class translation factor GTPase superfamily. Classic translation factor GTPase family. LepA subfamily.

The protein resides in the cell inner membrane. The catalysed reaction is GTP + H2O = GDP + phosphate + H(+). Functionally, required for accurate and efficient protein synthesis under certain stress conditions. May act as a fidelity factor of the translation reaction, by catalyzing a one-codon backward translocation of tRNAs on improperly translocated ribosomes. Back-translocation proceeds from a post-translocation (POST) complex to a pre-translocation (PRE) complex, thus giving elongation factor G a second chance to translocate the tRNAs correctly. Binds to ribosomes in a GTP-dependent manner. The protein is Elongation factor 4 of Yersinia pestis (strain Pestoides F).